The chain runs to 88 residues: Exodeoxyribonuclease 7 small subunit (88 aa).

Residues 69–88 form a disordered region; the sequence is DPMRPDDGEPFDPSIVSTSQ.

It belongs to the XseB family. Heterooligomer composed of large and small subunits.

It localises to the cytoplasm. The catalysed reaction is Exonucleolytic cleavage in either 5'- to 3'- or 3'- to 5'-direction to yield nucleoside 5'-phosphates.. Its function is as follows. Bidirectionally degrades single-stranded DNA into large acid-insoluble oligonucleotides, which are then degraded further into small acid-soluble oligonucleotides. The polypeptide is Exodeoxyribonuclease 7 small subunit (Xylella fastidiosa (strain M12)).